The sequence spans 204 residues: Rho GDP-dissociation inhibitor 1 (204 aa).

A disordered region spans residues 1 to 36; sequence MAEQEPTAEQLAQIAAENEEDEHSVNYKPPAQKSIQ. Ala2 bears the N-acetylalanine mark. Residue Ser34 is modified to Phosphoserine. Lys43 bears the N6-acetyllysine mark. Position 47 is a phosphoserine (Ser47). Lys105 and Lys127 each carry N6-acetyllysine. Residues Lys138 and Lys141 each participate in a glycyl lysine isopeptide (Lys-Gly) (interchain with G-Cter in SUMO1); alternate cross-link. Residues Lys138 and Lys141 each participate in a glycyl lysine isopeptide (Lys-Gly) (interchain with G-Cter in SUMO2); alternate cross-link. Lys141 is modified (N6-acetyllysine; alternate). Lys141 is modified (N6-succinyllysine; alternate). Residue Lys178 is modified to N6-acetyllysine.

It belongs to the Rho GDI family. In terms of assembly, monomer. Interacts with FER. Interacts with PLXNB3. Forms a heterodimer with RAC1. Interacts with RHOA, the affinity is increased by three orders of magnitude when RHOA is prenylated. Interacts with PSMD10; the interaction increases ARHGDIA association with RHOA, leading to ARHGDIA-mediated inactivation of RHOA and ROCK and prolonged AKT activation. Interacts with KANK2; the interaction is direct and may regulate the interaction of ARHGDIA with RHOA, RAC1 and CDC42. Interacts with RHOC. Interacts with CDC42. Interacts with NGFR (via death domain); NGFR binding decreases the affinity for RHOA. As to expression, in kidney glomerulus, expressed in podocytes and mesangial cells.

It is found in the cytoplasm. Controls Rho proteins homeostasis. Regulates the GDP/GTP exchange reaction of the Rho proteins by inhibiting the dissociation of GDP from them, and the subsequent binding of GTP to them. Retains Rho proteins such as CDC42, RAC1 and RHOA in an inactive cytosolic pool, regulating their stability and protecting them from degradation. Actively involved in the recycling and distribution of activated Rho GTPases in the cell, mediates extraction from membranes of both inactive and activated molecules due its exceptionally high affinity for prenylated forms. Through the modulation of Rho proteins, may play a role in cell motility regulation. In glioma cells, inhibits cell migration and invasion by mediating the signals of SEMA5A and PLXNB3 that lead to inactivation of RAC1. The sequence is that of Rho GDP-dissociation inhibitor 1 (Arhgdia) from Mus musculus (Mouse).